Here is a 653-residue protein sequence, read N- to C-terminus: Protein CBFA2T3 (653 aa).

Basic and acidic residues predominate over residues 1 to 10 (MPASRLRDRA). Positions 1–109 (MPASRLRDRA…HTHREDGPAT (109 aa)) are disordered. Residues 1–127 (MPASRLRDRA…CLKWSMVCLL (127 aa)) form a required for nucleolar targeting (in isoform 1) region. The interval 1–430 (MPASRLRDRA…RRCQEADREE (430 aa)) is mediates interaction with PDE7A (in isoform 2). A mediates localization to the nucleus region spans residues 1 to 435 (MPASRLRDRA…ADREELNHWA (435 aa)). Over residues 11–23 (ASSASGSTCGSMS) the composition is skewed to low complexity. A compositionally biased stretch (pro residues) spans 75-86 (STPPSMPPPPPA). Residues 145–242 (PNGFSNGPAT…IPFLKANLPL (98 aa)) are interaction with ZBTB33. The region spanning 171–266 (ARQLSKLKRF…TPAQYLAQHE (96 aa)) is the TAFH domain. The segment at 176 to 268 (KLKRFLTTLQ…AQYLAQHEQL (93 aa)) is interaction with HIF1A. Positions 284–342 (LLEVNENGKRRTPDRTKENGSDRDPLHPEHLSKRPCTLNPAQRYSPSNGPPQPTPPPHY) are disordered. Positions 289–315 (ENGKRRTPDRTKENGSDRDPLHPEHLS) are enriched in basic and acidic residues. The segment covering 331–341 (NGPPQPTPPPH) has biased composition (pro residues). Positions 394-412 (EEWKHLNNLLNCIMDMVEK) are nervy homology region 2 (NHR2); essential for down-regulation of PFKFB3, PFKFB4 and PDK1 expression. Basic and acidic residues predominate over residues 434–446 (WARRYSDAEDTKK). The tract at residues 434–472 (WARRYSDAEDTKKGPAPAAARPRSSSAGPEGPQLDVPRE) is disordered. The span at 447-462 (GPAPAAARPRSSSAGP) shows a compositional bias: low complexity. 2 positions are modified to phosphoserine: Ser457 and Ser459. Thr479 carries the phosphothreonine modification. The mediates interaction with PRKAR2A stretch occupies residues 485 to 506 (DIWRKAEEAVNEVKRQAMSELQ). Residues 485–533 (DIWRKAEEAVNEVKRQAMSELQKAVSDAERKAHELITTERAKMERALAE) are nervy homology region 3 (NHR3); essential for down-regulation of PFKFB3, PFKFB4 and PDK1 expression. A coiled-coil region spans residues 488 to 543 (RKAEEAVNEVKRQAMSELQKAVSDAERKAHELITTERAKMERALAEAKRQASEDAL). Residues Cys556, Cys559, Cys567, Cys570, Cys576, Cys580, His588, and Cys592 each coordinate Zn(2+). Residues 556–592 (CWNCGRKASETCSGCNAARYCGSFCQHRDWEKHHHVC) form an MYND-type zinc finger. The tract at residues 603-653 (VADPVPGPPEAAHSLGPSLPVGAASPSEAGSAGPSRPGSPSPPGPLDTVPR) is disordered. Residues 622 to 638 (PVGAASPSEAGSAGPSR) are compositionally biased toward low complexity. A phosphoserine mark is found at Ser637 and Ser641. Residue Thr650 is modified to Phosphothreonine.

Belongs to the CBFA2T family. As to quaternary structure, homooligomer. Homotetramerization is mediated by nervy homology region 2 (NRH2). Can interact with RUNX1T1 and CBFA2T2; heterotetramerization between members of the CBFA2T family is proposed. Component of a TAL-1 complex composed at least of CBFA2T3, LDB1, TAL1 and TCF3. Interacts with ERBB4, HDAC1, HDAC2, HDAC3, HDAC6, HDAC8, NCOR1, NCOR2, and ZNF652. According to PubMed:12242670, may not interact with HDAC6. Interacts with PLXNA1, PLXNA3 and PRKAR1A. Isoform 2 interacts with PRKAR2A, PDE7A and probably PDE4A. Interacts with ZBTB4, ZBTB38 and ZBTB33. Interacts with HIF1A and EGLN1. Interacts with the AML1-MTG8/ETO fusion protein. In terms of tissue distribution, widely expressed with higher expression in heart, pancreas, skeletal muscle, spleen, thymus and peripheral blood leukocytes. Expressed in hematopoietic cells (at protein level).

It is found in the nucleus. It localises to the nucleolus. The protein resides in the nucleoplasm. The protein localises to the golgi apparatus membrane. Transcriptional corepressor which facilitates transcriptional repression via its association with DNA-binding transcription factors and recruitment of other corepressors and histone-modifying enzymes. Can repress the expression of MMP7 in a ZBTB33-dependent manner. Reduces the protein levels and stability of the transcriptinal regulator HIF1A; interacts with EGLN1 and promotes the HIF1A prolyl hydroxylation-dependent ubiquitination and proteasomal degradation pathway. Contributes to inhibition of glycolysis and stimulation of mitochondrial respiration by down-regulating the expression of glycolytic genes including PFKFB3, PFKFB4, PDK1, PFKP, LDHA and HK1 which are direct targets of HIF1A. Regulates the proliferation and the differentiation of erythroid progenitors by repressing the expression of TAL1 target genes. Plays a role in granulocyte differentiation. In terms of biological role, isoform 2 functions as an A-kinase-anchoring protein. This chain is Protein CBFA2T3 (CBFA2T3), found in Homo sapiens (Human).